The following is a 1941-amino-acid chain: WD repeat-containing protein 81 (1941 aa).

The tract at residues 1-27 (MAQGSGGREGALRTPAGGWHSPPSPDM) is disordered. Residues 1–650 (MAQGSGGREG…TPCEASWTRD (650 aa)) form a necessary and sufficient for the interaction with SQSTM1 region. The BEACH domain maps to 337–614 (GQPTGQEELR…IPKLLVQTIQ (278 aa)). Disordered regions lie at residues 618-637 (GREDFTENPGQLPNGVGRPV), 694-718 (VASASRPGRRNKAAGADPGEGEEGR), 1022-1074 (SKDL…VSFH), 1097-1217 (PQEA…EGKE), 1523-1556 (PSSRNPASVEPTMPGTGPEWDPHGGGCPQDDGHS), and 1569-1602 (QIPNDSRPENPGPLGPISGVGGGGLGSGSDDNAL). Polar residues predominate over residues 1137–1146 (LRSGDSSQDL). Over residues 1151–1174 (GSEEEEEEEDSCVVLEEEEGEQEE) the composition is skewed to acidic residues. Residues 1586–1595 (SGVGGGGLGS) show a composition bias toward gly residues. 7 WD repeats span residues 1639 to 1677 (IRLQSFPGHSGAVKCVAPLSSEDFFLSGSKDRTVRLWPL), 1686 to 1724 (ETAPRLVYTQHRKSVFFVGQLEAPQHVVSCDGAVHVWDP), 1729 to 1769 (TLRT…FVDC), 1777 to 1815 (EFRLGGGLNPGLVRALAISPSGRSVVAGFSSGFMVLLDT), 1819 to 1856 (LVLRGWPAHEGDILQIKAVEGSVLVSSSSDHSLTVWKE), 1860 to 1896 (KPTHHYKSASDPIHTFDLYGSEVVTGTVSNKIGVCSL), and 1902 to 1941 (QATTKLSSENFRGTLTSLALLPTKRHLLLGSDNGVIRLLA).

Belongs to the WD repeat WDR81 family. In terms of assembly, interacts with WDR91; involved in early to late endosome cargo transport. Interacts with BECN1; negatively regulates the PI3 kinase/PI3K activity associated with endosomal membranes. Interacts with SQSTM1; the interaction is direct and regulates the interaction of SQSTM1 with ubiquitinated proteins. Interacts with MAP1LC3C; recruits MAP1LC3C to ubiquitinated protein aggregates in the aggrephagy process. In terms of tissue distribution, widely expressed. In the brain, highest levels in cerebellum and corpus callosum.

The protein resides in the early endosome membrane. It is found in the late endosome membrane. Its subcellular location is the lysosome membrane. It localises to the cytoplasmic vesicle. The protein localises to the autophagosome membrane. The protein resides in the mitochondrion. It is found in the cytoplasm. Its subcellular location is the cytosol. Functionally, functions as a negative regulator of the PI3 kinase/PI3K activity associated with endosomal membranes via BECN1, a core subunit of the PI3K complex. By modifying the phosphatidylinositol 3-phosphate/PtdInsP3 content of endosomal membranes may regulate endosome fusion, recycling, sorting and early to late endosome transport. It is for instance, required for the delivery of cargos like BST2/tetherin from early to late endosome and thereby participates indirectly to their degradation by the lysosome. May also play a role in aggrephagy, the macroautophagic degradation of ubiquitinated protein aggregates. In this process, may regulate the interaction of SQSTM1 with ubiquitinated proteins and also recruit MAP1LC3C. May also be involved in maintenance of normal mitochondrial structure and organization. The polypeptide is WD repeat-containing protein 81 (Homo sapiens (Human)).